Consider the following 489-residue polypeptide: Cobyric acid synthase (489 aa).

The 190-residue stretch at 252–441 folds into the GATase cobBQ-type domain; the sequence is ALTIGVIQLP…IHGIFANTEF (190 aa). C330 acts as the Nucleophile in catalysis. Residue H433 is part of the active site.

This sequence belongs to the CobB/CobQ family. CobQ subfamily.

The protein operates within cofactor biosynthesis; adenosylcobalamin biosynthesis. Its function is as follows. Catalyzes amidations at positions B, D, E, and G on adenosylcobyrinic A,C-diamide. NH(2) groups are provided by glutamine, and one molecule of ATP is hydrogenolyzed for each amidation. This Herpetosiphon aurantiacus (strain ATCC 23779 / DSM 785 / 114-95) protein is Cobyric acid synthase.